Here is a 60-residue protein sequence, read N- to C-terminus: Large ribosomal subunit protein bL33 (60 aa).

This sequence belongs to the bacterial ribosomal protein bL33 family.

In Pelodictyon phaeoclathratiforme (strain DSM 5477 / BU-1), this protein is Large ribosomal subunit protein bL33.